Consider the following 1006-residue polypeptide: Probable beta-galactosidase A (1006 aa).

Positions 1-18 (MKLLSVCAIALLAAQAAG) are cleaved as a signal peptide. The substrate site is built by Y96, N140, A141, and E142. A glycan (N-linked (GlcNAc...) asparagine) is linked at N156. N199 is a substrate binding site. E200 acts as the Proton donor in catalysis. C205 and C206 form a disulfide bridge. Y260 is a binding site for substrate. C266 and C315 are joined by a disulfide. E298 functions as the Nucleophile in the catalytic mechanism. Y364 is a substrate binding site. N-linked (GlcNAc...) asparagine glycans are attached at residues N373, N402, N422, N622, N760, N777, and N914.

The protein belongs to the glycosyl hydrolase 35 family.

Its subcellular location is the secreted. It carries out the reaction Hydrolysis of terminal non-reducing beta-D-galactose residues in beta-D-galactosides.. Cleaves beta-linked terminal galactosyl residues from gangliosides, glycoproteins, and glycosaminoglycans. The chain is Probable beta-galactosidase A (lacA) from Aspergillus fumigatus (strain CBS 144.89 / FGSC A1163 / CEA10) (Neosartorya fumigata).